The chain runs to 553 residues: Chaperonin GroEL 1 (553 aa).

ATP contacts are provided by residues 29–32, 86–90, Gly413, 476–478, and Asp492; these read TIGP, DGTTT, and NAL. The interval 521–542 is disordered; that stretch reads KPEPPAAPAPGGDPMGGMGGMG. The span at 533–542 shows a compositional bias: gly residues; sequence DPMGGMGGMG.

Belongs to the chaperonin (HSP60) family. In terms of assembly, forms a cylinder of 14 subunits composed of two heptameric rings stacked back-to-back. Interacts with the co-chaperonin GroES.

The protein resides in the cytoplasm. It catalyses the reaction ATP + H2O + a folded polypeptide = ADP + phosphate + an unfolded polypeptide.. In terms of biological role, together with its co-chaperonin GroES, plays an essential role in assisting protein folding. The GroEL-GroES system forms a nano-cage that allows encapsulation of the non-native substrate proteins and provides a physical environment optimized to promote and accelerate protein folding. In Synechococcus sp. (strain WH7803), this protein is Chaperonin GroEL 1.